An 87-amino-acid chain; its full sequence is Pyocin-S2 immunity protein (87 aa).

It belongs to the colicins ColE2/ColE8/ColE9 and pyocins S1/S2 family.

The protein is Pyocin-S2 immunity protein (imm2) of Pseudomonas aeruginosa (strain ATCC 15692 / DSM 22644 / CIP 104116 / JCM 14847 / LMG 12228 / 1C / PRS 101 / PAO1).